Consider the following 81-residue polypeptide: Cytoplasmic envelopment protein 3 (81 aa).

Gly-2 is lipidated: N-myristoyl glycine; by host. The Di-leucine-like internalization motif signature appears at 22-23; that stretch reads LV. The interval 41-47 is asp/Glu-rich (acidic); the sequence is DFDENVT. The disordered stretch occupies residues 47–81; the sequence is TEDADKSTQRRPRVIDVTPKRKPSGKSSHSKCAKC. Positions 66-81 are enriched in basic residues; that stretch reads KRKPSGKSSHSKCAKC.

The protein belongs to the herpesviridae cytoplasmic envelopment protein 3 family. Interacts with cytoplasmic envelopment protein 2; this interaction is essential for the proper localization of each protein to the assembly complex and thus for the production of infectious virus. Post-translationally, myristoylation and palmitoylation (probably on one or more of the nearby cysteines at the N-terminus) enable membrane-binding and Golgi apparatus-specific targeting and are essential for efficient packaging. In terms of processing, phosphorylated. Phosphorylation does not seem to be required for recycling to the host Golgi apparatus. Packaging is selective for underphosphorylated forms.

It is found in the virion tegument. The protein resides in the virion membrane. It localises to the host cell membrane. Its subcellular location is the host Golgi apparatus membrane. In terms of biological role, plays an important role in the cytoplasmic envelopment of tegument proteins and capsids during the assembly and egress processes. Also participates in viral entry at the fusion step probably by regulating the core fusion machinery. The protein is Cytoplasmic envelopment protein 3 of Homo sapiens (Human).